A 607-amino-acid polypeptide reads, in one-letter code: Acyl-coenzyme A thioesterase 11 (607 aa).

A mitochondrion-targeting transit peptide spans 1 to 13; the sequence is MIQNVGNHLRRGL. Residues Ser-15 and Ser-25 each carry the phosphoserine modification. The HotDog ACOT-type 1 domain occupies 43–155; the sequence is NPTEVQMSQL…LATFVARREI (113 aa). CoA is bound by residues 91–93, 120–122, Arg-181, and 271–273; these read TAS, NSS, and HFR. The HotDog ACOT-type 2 domain maps to 216–329; that stretch reads EKTRVESVEL…FMTFVVLDAD (114 aa). The START domain maps to 375 to 585; sequence LSVPWDPSNQ…GWNGKLAGGH (211 aa).

Isoform 1 is predominantly expressed in skeletal muscle, liver, testis, stomach, spleen, lung and brain. Isoform 2 is predominantly expressed in kidney, uterus, hibernoma and white adipose tissue.

The protein localises to the mitochondrion matrix. Its subcellular location is the cytoplasm. The catalysed reaction is hexadecanoyl-CoA + H2O = hexadecanoate + CoA + H(+). It carries out the reaction tetradecanoyl-CoA + H2O = tetradecanoate + CoA + H(+). It catalyses the reaction dodecanoyl-CoA + H2O = dodecanoate + CoA + H(+). The enzyme catalyses butanoyl-CoA + H2O = butanoate + CoA + H(+). The protein operates within lipid metabolism; fatty acid metabolism. In terms of biological role, has an acyl-CoA thioesterase activity with a preference for the long chain fatty acyl-CoA thioesters hexadecanoyl-CoA/palmitoyl-CoA and tetradecanoyl-CoA/myristoyl-CoA which are the main substrates in the mitochondrial beta-oxidation pathway. The protein is Acyl-coenzyme A thioesterase 11 (ACOT11) of Homo sapiens (Human).